A 150-amino-acid chain; its full sequence is Large ribosomal subunit protein bL9 (150 aa).

Belongs to the bacterial ribosomal protein bL9 family.

In terms of biological role, binds to the 23S rRNA. The protein is Large ribosomal subunit protein bL9 of Enterococcus faecalis (strain ATCC 700802 / V583).